The sequence spans 448 residues: Homogentisate 1,2-dioxygenase (448 aa).

The active-site Proton acceptor is His-303. 2 residues coordinate Fe cation: His-346 and Glu-352. Homogentisate-binding residues include Tyr-361 and His-382. His-382 serves as a coordination point for Fe cation.

Belongs to the homogentisate dioxygenase family. As to quaternary structure, hexamer; dimer of trimers. Requires Fe cation as cofactor.

The enzyme catalyses homogentisate + O2 = 4-maleylacetoacetate + H(+). Its pathway is amino-acid degradation; L-phenylalanine degradation; acetoacetate and fumarate from L-phenylalanine: step 4/6. In terms of biological role, involved in the catabolism of homogentisate (2,5-dihydroxyphenylacetate or 2,5-OH-PhAc), a central intermediate in the degradation of phenylalanine and tyrosine. Catalyzes the oxidative ring cleavage of the aromatic ring of homogentisate to yield maleylacetoacetate. This chain is Homogentisate 1,2-dioxygenase, found in Rhodopseudomonas palustris (strain HaA2).